The chain runs to 270 residues: Phosphatidylglycerol--prolipoprotein diacylglyceryl transferase (270 aa).

4 consecutive transmembrane segments (helical) span residues phenylalanine 19 to alanine 39, leucine 56 to glutamate 76, glutamine 92 to alanine 112, and glycine 116 to isoleucine 136. Arginine 138 contacts a 1,2-diacyl-sn-glycero-3-phospho-(1'-sn-glycerol). 3 helical membrane-spanning segments follow: residues histidine 178 to leucine 198, glycine 206 to leucine 226, and leucine 236 to valine 256.

The protein belongs to the Lgt family.

The protein resides in the cell membrane. The catalysed reaction is L-cysteinyl-[prolipoprotein] + a 1,2-diacyl-sn-glycero-3-phospho-(1'-sn-glycerol) = an S-1,2-diacyl-sn-glyceryl-L-cysteinyl-[prolipoprotein] + sn-glycerol 1-phosphate + H(+). It functions in the pathway protein modification; lipoprotein biosynthesis (diacylglyceryl transfer). Its function is as follows. Catalyzes the transfer of the diacylglyceryl group from phosphatidylglycerol to the sulfhydryl group of the N-terminal cysteine of a prolipoprotein, the first step in the formation of mature lipoproteins. This chain is Phosphatidylglycerol--prolipoprotein diacylglyceryl transferase, found in Bacillus cereus (strain G9842).